The following is a 404-amino-acid chain: Formate-dependent phosphoribosylglycinamide formyltransferase (404 aa).

Residues 25–26 and E85 each bind N(1)-(5-phospho-beta-D-ribosyl)glycinamide; that span reads EL. ATP is bound by residues R118, K159, 164 to 169, 199 to 202, and E207; these read SSGKGQ and EGFV. Residues 123-318 form the ATP-grasp domain; sequence RLAAEELGLP…EFELHARAIL (196 aa). Residues E277 and E289 each contribute to the Mg(2+) site. Residues D296, K365, and 372–373 each bind N(1)-(5-phospho-beta-D-ribosyl)glycinamide; that span reads RR.

It belongs to the PurK/PurT family. Homodimer.

It catalyses the reaction N(1)-(5-phospho-beta-D-ribosyl)glycinamide + formate + ATP = N(2)-formyl-N(1)-(5-phospho-beta-D-ribosyl)glycinamide + ADP + phosphate + H(+). It functions in the pathway purine metabolism; IMP biosynthesis via de novo pathway; N(2)-formyl-N(1)-(5-phospho-D-ribosyl)glycinamide from N(1)-(5-phospho-D-ribosyl)glycinamide (formate route): step 1/1. Its function is as follows. Involved in the de novo purine biosynthesis. Catalyzes the transfer of formate to 5-phospho-ribosyl-glycinamide (GAR), producing 5-phospho-ribosyl-N-formylglycinamide (FGAR). Formate is provided by PurU via hydrolysis of 10-formyl-tetrahydrofolate. The sequence is that of Formate-dependent phosphoribosylglycinamide formyltransferase from Burkholderia thailandensis (strain ATCC 700388 / DSM 13276 / CCUG 48851 / CIP 106301 / E264).